A 1262-amino-acid polypeptide reads, in one-letter code: Separin homolog sep-1 (1262 aa).

The Peptidase C50 domain occupies 957–1051 (VQNAYYILDP…SVRTIPQALG (95 aa)). Cys1040 is an active-site residue. Residues 1147 to 1262 (KDQRNLPQTP…ARTPSRSRNL (116 aa)) form a disordered region. Composition is skewed to polar residues over residues 1151–1162 (NLPQTPKTSART) and 1177–1197 (FVTSKSVPMTPIFSNNENKSP). Low complexity predominate over residues 1243–1262 (TPTTRTTRSSARTPSRSRNL).

As to quaternary structure, forms a complex with securin-like protein ify-1 (via C-terminus). Interaction with ify-1 stabilizes sep-1. Also maintains the complex in the cytoplasm during interphase and recruits it to chromosomes during the first meiotic division. In terms of tissue distribution, expressed in oocytes. Expressed in male germline. Expressed in spermatocytes but undetectable in spermatids (at protein level).

It is found in the cytoplasm. Its subcellular location is the chromosome. The protein resides in the cytoplasmic granule. It localises to the cytoskeleton. The protein localises to the microtubule organizing center. It is found in the centrosome. Its subcellular location is the spindle. The protein resides in the cleavage furrow. It localises to the midbody. The enzyme catalyses All bonds known to be hydrolyzed by this endopeptidase have arginine in P1 and an acidic residue in P4. P6 is often occupied by an acidic residue or by a hydroxy-amino-acid residue, the phosphorylation of which enhances cleavage.. Probably maintained in an inactive state via its interaction with securin ify-1 which acts as a pseudosubstrate thereby blocking access to the catalytic site. Upon ify-1 degradation at the onset of anaphase, sep-1 is likely to become active. In addition, interaction with ify-1 stabilizes sep-1. Cysteine protease, which plays a central role in homologous chromosome separation during meiosis I and in sister chromatid separation during embryonic mitosis. Promotes chromosome/sister chromatid segregation by cleaving the scc-1 (mitosis) and rec-8 (meiosis) subunits of the cohesin complex at the onset of anaphase. May cleave histone H3-like protein cpar-1 during meiosis I metaphase-anaphase transition. Promotes cortical granule exocytosis after oocyte fertilization during the first meiotic anaphase. Essential for embryonic cytokinesis by regulating rab-11-positive vesicle trafficking at the plasma membrane at the cleavage furrow and midbody. Regulates centriole segregation during spermatocyte meiosis. Required for embryonic anterior-posterior axis formation. This is Separin homolog sep-1 from Caenorhabditis elegans.